We begin with the raw amino-acid sequence, 254 residues long: Probable glucose-1-phosphate cytidylyltransferase (254 aa).

Substrate is bound by residues 6–10, 11–13, Lys-23, Thr-103, Arg-108, and Gly-126; these read LCGGK and GTR. Positions 127 and 232 each coordinate Mg(2+).

The protein belongs to the glucose-1-phosphate cytidylyltransferase family. Mg(2+) serves as cofactor.

It carries out the reaction alpha-D-glucose 1-phosphate + CTP + H(+) = CDP-D-glucose + diphosphate. Catalyzes the transfer of a CMP moiety from CTP to glucose 1-phosphate. The protein is Probable glucose-1-phosphate cytidylyltransferase (yfnH) of Bacillus subtilis (strain 168).